We begin with the raw amino-acid sequence, 762 residues long: Mitochondrial intermediate peptidase (762 aa).

The N-terminal 28 residues, 1–28 (MQVRTLLTLGKKKVIGNRQCILSLYRKY), are a transit peptide targeting the mitochondrion. Histidine 544 lines the Zn(2+) pocket. Glutamate 545 is an active-site residue. Zn(2+)-binding residues include histidine 548 and histidine 551.

This sequence belongs to the peptidase M3 family. Requires Zn(2+) as cofactor.

The protein resides in the mitochondrion matrix. The enzyme catalyses Release of an N-terminal octapeptide as second stage of processing of some proteins imported into the mitochondrion.. In terms of biological role, cleaves proteins, imported into the mitochondrion, to their mature size. While most mitochondrial precursor proteins are processed to the mature form in one step by mitochondrial processing peptidase (MPP), the sequential cleavage by MIP of an octapeptide after initial processing by MPP is a required step for a subgroup of nuclear-encoded precursor proteins destined for the matrix or the inner membrane. In Schizosaccharomyces pombe (strain 972 / ATCC 24843) (Fission yeast), this protein is Mitochondrial intermediate peptidase (oct1).